The sequence spans 195 residues: Phosphoheptose isomerase (195 aa).

The 159-residue stretch at 37 to 195 folds into the SIS domain; the sequence is ISDSFKQHGK…IEFEMAKIRQ (159 aa). Residue 52–54 coordinates substrate; that stretch reads NGG. Residues histidine 61 and glutamate 65 each contribute to the Zn(2+) site. Substrate contacts are provided by residues glutamate 65, 93 to 94, 119 to 121, serine 124, and glutamine 172; these read ND and STS. Zn(2+)-binding residues include glutamine 172 and histidine 180.

It belongs to the SIS family. GmhA subfamily. In terms of assembly, homotetramer. It depends on Zn(2+) as a cofactor.

It is found in the cytoplasm. It carries out the reaction 2 D-sedoheptulose 7-phosphate = D-glycero-alpha-D-manno-heptose 7-phosphate + D-glycero-beta-D-manno-heptose 7-phosphate. It functions in the pathway carbohydrate biosynthesis; D-glycero-D-manno-heptose 7-phosphate biosynthesis; D-glycero-alpha-D-manno-heptose 7-phosphate and D-glycero-beta-D-manno-heptose 7-phosphate from sedoheptulose 7-phosphate: step 1/1. Catalyzes the isomerization of sedoheptulose 7-phosphate in D-glycero-D-manno-heptose 7-phosphate. This Histophilus somni (strain 2336) (Haemophilus somnus) protein is Phosphoheptose isomerase.